The following is a 343-amino-acid chain: N-acetyl-gamma-glutamyl-phosphate reductase (343 aa).

The active site involves Cys-146.

The protein belongs to the NAGSA dehydrogenase family. Type 1 subfamily.

The protein resides in the cytoplasm. It carries out the reaction N-acetyl-L-glutamate 5-semialdehyde + phosphate + NADP(+) = N-acetyl-L-glutamyl 5-phosphate + NADPH + H(+). It functions in the pathway amino-acid biosynthesis; L-arginine biosynthesis; N(2)-acetyl-L-ornithine from L-glutamate: step 3/4. Functionally, catalyzes the NADPH-dependent reduction of N-acetyl-5-glutamyl phosphate to yield N-acetyl-L-glutamate 5-semialdehyde. The protein is N-acetyl-gamma-glutamyl-phosphate reductase of Arthrobacter sp. (strain FB24).